A 328-amino-acid polypeptide reads, in one-letter code: Aspartate carbamoyltransferase catalytic subunit (328 aa).

R55 and T56 together coordinate carbamoyl phosphate. L-aspartate is bound at residue K83. R105, H135, and Q138 together coordinate carbamoyl phosphate. L-aspartate contacts are provided by R176 and R230. G271 and P272 together coordinate carbamoyl phosphate.

This sequence belongs to the aspartate/ornithine carbamoyltransferase superfamily. ATCase family. As to quaternary structure, heterododecamer (2C3:3R2) of six catalytic PyrB chains organized as two trimers (C3), and six regulatory PyrI chains organized as three dimers (R2).

It carries out the reaction carbamoyl phosphate + L-aspartate = N-carbamoyl-L-aspartate + phosphate + H(+). It participates in pyrimidine metabolism; UMP biosynthesis via de novo pathway; (S)-dihydroorotate from bicarbonate: step 2/3. Catalyzes the condensation of carbamoyl phosphate and aspartate to form carbamoyl aspartate and inorganic phosphate, the committed step in the de novo pyrimidine nucleotide biosynthesis pathway. This is Aspartate carbamoyltransferase catalytic subunit from Streptomyces griseus subsp. griseus (strain JCM 4626 / CBS 651.72 / NBRC 13350 / KCC S-0626 / ISP 5235).